A 1163-amino-acid polypeptide reads, in one-letter code: Voltage-gated inwardly rectifying potassium channel KCNH2 (1163 aa).

Topologically, residues 1–405 (MPVRRGHVAP…RIHRWTILHY (405 aa)) are cytoplasmic. The 72-residue stretch at 17–88 (TIIRKFEGQS…AAQIAQALLG (72 aa)) folds into the PAS domain. The PAC domain occupies 92-144 (RKVEIAFYRKDGSCFLCLVDVVPVKNEDGAVIMFILNFEVVMEKDMVGSPAHD). Residues 235-286 (VGPASASPVASIPGPHPSPRAQSLNPDASGSSCSLARTRSRESCASVRRASS) are disordered. Phosphoserine is present on residues serine 239 and serine 245. Polar residues predominate over residues 254–271 (RAQSLNPDASGSSCSLAR). Phosphoserine is present on residues serine 285, serine 286, serine 322, and serine 353. Residues 406–426 (SPFKAVWDWLILLLVIYTAVF) form a helical membrane-spanning segment. Topologically, residues 427 to 452 (TPYSAAFLLKETEDGSQAPDCGYACQ) are extracellular. Residues 453-473 (PLAVVDLLVDIMFIVDILINF) form a helical membrane-spanning segment. Residues 474–497 (RTTYVNANEEVVSHPGRIAVHYFK) are Cytoplasmic-facing. A helical membrane pass occupies residues 498–518 (GWFLIDMVAAIPFDLLIFGSG). The Extracellular segment spans residues 519–522 (SEEL). A helical; Voltage-sensor membrane pass occupies residues 523–543 (IGLLKTARLLRLVRVARKLDR). At 544–549 (YSEYGA) the chain is on the cytoplasmic side. A helical membrane pass occupies residues 550-570 (AVLFLLMCTFALIAHWLACIW). Over 571–613 (YAIGNMEQPHMDSHIGWLHNLGDQIGKPYNSSGLGGPSIKDKY) the chain is Extracellular. The N-linked (GlcNAc...) asparagine glycan is linked to asparagine 600. Positions 614–634 (VTALYFTFSSLTSVGFGNVSP) form an intramembrane region, pore-forming. The Selectivity filter motif lies at 626–631 (SVGFGN). The Extracellular portion of the chain corresponds to 635 to 640 (NTNSEK). A helical transmembrane segment spans residues 641-661 (IFSICVMLIGSLMYASIFGNV). Over 662–1163 (SAIIQRLYSG…LHRHGSDPGS (502 aa)) the chain is Cytoplasmic. Residues 744–844 (PFRGATKGCL…IHRDDLLEVL (101 aa)) are cNMP-binding domain. Serine 873 and serine 876 each carry phosphoserine. 3 disordered regions span residues 873 to 992 (SPSS…NPLS), 1015 to 1043 (ELPR…GDVE), and 1126 to 1163 (AGAP…DPGS). A compositionally biased stretch (basic residues) spans 885–894 (RQRKRKLSFR). The span at 932 to 943 (GESPSSGPSSPE) shows a compositional bias: low complexity. Arginine 1018 bears the Omega-N-methylarginine mark. A coiled-coil region spans residues 1039 to 1066 (RGDVESRLDALQRQLNRLETRLSADMAT). The residue at position 1141 (serine 1141) is a Phosphoserine.

Belongs to the potassium channel family. H (Eag) (TC 1.A.1.20) subfamily. Kv11.1/KCNH2 sub-subfamily. In terms of assembly, the potassium channel is probably composed of a homo- or heterotetrameric complex of pore-forming alpha subunits that can associate with modulating beta subunits. Interacts with DNAJB12 and DNAJB14; chaperones DNAJB12 and DNAJB14 promote tetramerization. Heteromultimer with KCNH6/ERG2 and KCNH7/ERG3. Interacts with ALG10B. Forms a stable complex with KCNE1 or KCNE2, and that this heteromultimerization regulates Inward rectifier potassium channel activity. Interacts with CANX. The core-glycosylated, but not the fully glycosylated form interacts with RNF207. Interacts with NDFIP1 and NDFIP2; this interaction decreases the cell membrane expression by targeting KCNH2, through interaction with NEDD4L, for the degradation through the multivesicular bodies (MVBs)-lysosomal pathway. Post-translationally, phosphorylated on serine and threonine residues. Phosphorylation by PKA inhibits ion conduction. As to expression, highly expressed in brain and testis, slightly less so in heart, adrenal, retina and thymus. Detected at lower levels in lung, soleus, tibialis, and at very low levels in cornea and lens. A shorter transcript is detected in skeletal muscle. Found in pituitary.

The protein localises to the cell membrane. The catalysed reaction is K(+)(in) = K(+)(out). Pore-forming (alpha) subunit of voltage-gated inwardly rectifying potassium channel. Characterized by unusual gating kinetics by producing relatively small outward currents during membrane depolarization and large inward currents during subsequent repolarization which reflect a rapid inactivation during depolarization and quick recovery from inactivation but slow deactivation (closing) during repolarization. Channel properties are modulated by cAMP and subunit assembly. Forms a stable complex with KCNE1 or KCNE2, and that this heteromultimerization regulates inward rectifier potassium channel activity. This is Voltage-gated inwardly rectifying potassium channel KCNH2 from Rattus norvegicus (Rat).